A 207-amino-acid polypeptide reads, in one-letter code: UPF0319 protein VV1_2115 (207 aa).

An N-terminal signal peptide occupies residues 1–18; that stretch reads MLRVLGLAGMLMSFNIHA.

This sequence belongs to the UPF0319 family.

The sequence is that of UPF0319 protein VV1_2115 from Vibrio vulnificus (strain CMCP6).